Here is a 469-residue protein sequence, read N- to C-terminus: Phenylalanine--tRNA ligase alpha subunit (469 aa).

Residues T309, 348-350 (QLD), and F388 contribute to the L-phenylalanine site. Mg(2+) is bound at residue E390.

This sequence belongs to the class-II aminoacyl-tRNA synthetase family. Phe-tRNA synthetase alpha subunit type 2 subfamily. Tetramer of two alpha and two beta subunits. Mg(2+) is required as a cofactor.

It is found in the cytoplasm. It carries out the reaction tRNA(Phe) + L-phenylalanine + ATP = L-phenylalanyl-tRNA(Phe) + AMP + diphosphate + H(+). The sequence is that of Phenylalanine--tRNA ligase alpha subunit from Sulfurisphaera tokodaii (strain DSM 16993 / JCM 10545 / NBRC 100140 / 7) (Sulfolobus tokodaii).